The sequence spans 381 residues: Sensor histidine kinase FlgS (381 aa).

Residues 177 to 381 (HLAHEIRNPV…TFEIKILNAS (205 aa)) form the Histidine kinase domain. H180 carries the post-translational modification Phosphohistidine; by autocatalysis.

In terms of assembly, interacts (via its C-terminal kinase domain) with FlhA (via N-terminus). Post-translationally, autophosphorylated.

It catalyses the reaction ATP + protein L-histidine = ADP + protein N-phospho-L-histidine.. Member of the two-component regulatory system FlgR/FlgS that induces the transcriptional induction of the genes needed in motility and flagellar biogenesis. Also plays an essential role in bacterial survival at pH 2.5 independently of FlgR. Functions as a sensor protein kinase which is autophosphorylated at a histidine residue and transfers its phosphate group to the conserved aspartic acid residue in the regulatory domain of FlgR. In turn, FlgR functions as a transcriptional regulator initiating transcription from RpoN-dependent promoters. The polypeptide is Sensor histidine kinase FlgS (flgS) (Helicobacter pylori (strain ATCC 700392 / 26695) (Campylobacter pylori)).